The chain runs to 359 residues: Guanine nucleotide-binding protein alpha-4 subunit (359 aa).

A lipid anchor (N-myristoyl glycine) is attached at Gly-2. Cys-3 carries the S-palmitoyl cysteine lipid modification. Positions 31–359 constitute a G-alpha domain; the sequence is TEVKLLLLGA…RYNLKDCGLF (329 aa). Residues 34–47 are G1 motif; the sequence is KLLLLGAGESGKST. GTP contacts are provided by residues 39 to 46, 178 to 184, 203 to 207, 272 to 275, and Ala-331; these read GAGESGKS, LRARVKS, DVGGQ, and NKMD. Ser-46 lines the Mg(2+) pocket. The interval 176-184 is G2 motif; it reads DILRARVKS. The segment at 199 to 208 is G3 motif; that stretch reads FRMFDVGGQR. A G4 motif region spans residues 268–275; the sequence is ILFLNKMD. The tract at residues 329-334 is G5 motif; it reads TCATDT.

It belongs to the G-alpha family. G(i/o/t/z) subfamily. As to quaternary structure, g proteins are composed of 3 units; alpha, beta and gamma. The alpha chain contains the guanine nucleotide binding site.

Functionally, guanine nucleotide-binding proteins (G proteins) are involved as modulators or transducers in various transmembrane signaling systems. The sequence is that of Guanine nucleotide-binding protein alpha-4 subunit (gpa-4) from Caenorhabditis briggsae.